A 309-amino-acid polypeptide reads, in one-letter code: Ribonuclease Z (309 aa).

Positions 64, 66, 68, 69, 141, 209, and 267 each coordinate Zn(2+). Residue aspartate 68 is the Proton acceptor of the active site.

It belongs to the RNase Z family. Homodimer. The cofactor is Zn(2+).

The catalysed reaction is Endonucleolytic cleavage of RNA, removing extra 3' nucleotides from tRNA precursor, generating 3' termini of tRNAs. A 3'-hydroxy group is left at the tRNA terminus and a 5'-phosphoryl group is left at the trailer molecule.. Zinc phosphodiesterase, which displays some tRNA 3'-processing endonuclease activity. Probably involved in tRNA maturation, by removing a 3'-trailer from precursor tRNA. The chain is Ribonuclease Z from Picrophilus torridus (strain ATCC 700027 / DSM 9790 / JCM 10055 / NBRC 100828 / KAW 2/3).